We begin with the raw amino-acid sequence, 184 residues long: ATP-dependent protease subunit HslV (184 aa).

Residue Thr-12 is part of the active site. Positions 166, 169, and 172 each coordinate Na(+).

This sequence belongs to the peptidase T1B family. HslV subfamily. As to quaternary structure, a double ring-shaped homohexamer of HslV is capped on each side by a ring-shaped HslU homohexamer. The assembly of the HslU/HslV complex is dependent on binding of ATP.

The protein localises to the cytoplasm. The catalysed reaction is ATP-dependent cleavage of peptide bonds with broad specificity.. With respect to regulation, allosterically activated by HslU binding. In terms of biological role, protease subunit of a proteasome-like degradation complex believed to be a general protein degrading machinery. This Brucella melitensis biotype 1 (strain ATCC 23456 / CCUG 17765 / NCTC 10094 / 16M) protein is ATP-dependent protease subunit HslV.